A 199-amino-acid polypeptide reads, in one-letter code: MTTPRLILASASPARRRLLATVGLTVEVQPSHFDESLVQLNDPPALVQELAFRKAASVARSQTEPALVLGCDSVLAINGEICGKPASPAEAIARWQQMRGQWGELHTGHALIDSASQRRWLACGTTRVRFAEVEDAEIKAYVATGEPLACAGAFALEGKGGLFIAEIQGCHTNVIGLSLPLLRELLLAADYPLLQAWQT.

The active-site Proton acceptor is the aspartate 72.

It belongs to the Maf family. A divalent metal cation serves as cofactor.

Its subcellular location is the cytoplasm. It catalyses the reaction a ribonucleoside 5'-triphosphate + H2O = a ribonucleoside 5'-phosphate + diphosphate + H(+). The catalysed reaction is a 2'-deoxyribonucleoside 5'-triphosphate + H2O = a 2'-deoxyribonucleoside 5'-phosphate + diphosphate + H(+). Functionally, nucleoside triphosphate pyrophosphatase. May have a dual role in cell division arrest and in preventing the incorporation of modified nucleotides into cellular nucleic acids. The protein is Nucleoside triphosphate pyrophosphatase of Synechococcus elongatus (strain ATCC 33912 / PCC 7942 / FACHB-805) (Anacystis nidulans R2).